The primary structure comprises 121 residues: Large ribosomal subunit protein uL24 (121 aa).

This sequence belongs to the universal ribosomal protein uL24 family. In terms of assembly, part of the 50S ribosomal subunit.

One of two assembly initiator proteins, it binds directly to the 5'-end of the 23S rRNA, where it nucleates assembly of the 50S subunit. Functionally, located at the polypeptide exit tunnel on the outside of the subunit. In Pyrococcus horikoshii (strain ATCC 700860 / DSM 12428 / JCM 9974 / NBRC 100139 / OT-3), this protein is Large ribosomal subunit protein uL24.